The following is a 22-amino-acid chain: 5-methyltetrahydropteroyltriglutamate--homocysteine methyltransferase (22 aa).

The protein belongs to the vitamin-B12 independent methionine synthase family. It depends on Zn(2+) as a cofactor.

It localises to the cytoplasm. The catalysed reaction is 5-methyltetrahydropteroyltri-L-glutamate + L-homocysteine = tetrahydropteroyltri-L-glutamate + L-methionine. It functions in the pathway amino-acid biosynthesis; L-methionine biosynthesis via de novo pathway; L-methionine from L-homocysteine (MetE route): step 1/1. In terms of biological role, catalyzes the transfer of a methyl group from 5-methyltetrahydrofolate to homocysteine resulting in methionine formation. This chain is 5-methyltetrahydropteroyltriglutamate--homocysteine methyltransferase, found in Pseudotsuga menziesii (Douglas-fir).